The sequence spans 262 residues: Tryptophan synthase alpha chain (262 aa).

Catalysis depends on proton acceptor residues Glu-49 and Asp-60.

This sequence belongs to the TrpA family. Tetramer of two alpha and two beta chains.

The catalysed reaction is (1S,2R)-1-C-(indol-3-yl)glycerol 3-phosphate + L-serine = D-glyceraldehyde 3-phosphate + L-tryptophan + H2O. Its pathway is amino-acid biosynthesis; L-tryptophan biosynthesis; L-tryptophan from chorismate: step 5/5. In terms of biological role, the alpha subunit is responsible for the aldol cleavage of indoleglycerol phosphate to indole and glyceraldehyde 3-phosphate. This chain is Tryptophan synthase alpha chain, found in Caldanaerobacter subterraneus subsp. tengcongensis (strain DSM 15242 / JCM 11007 / NBRC 100824 / MB4) (Thermoanaerobacter tengcongensis).